A 50-amino-acid chain; its full sequence is Small ribosomal subunit protein eS31 (50 aa).

Zn(2+) is bound by residues Cys-22, Cys-25, Cys-40, and Cys-43. The C4-type zinc finger occupies 22–43 (CPRCGPGVFMADHGDRWACGKC).

This sequence belongs to the eukaryotic ribosomal protein eS31 family. As to quaternary structure, part of the 30S ribosomal subunit. The cofactor is Zn(2+).

The polypeptide is Small ribosomal subunit protein eS31 (Pyrococcus furiosus (strain ATCC 43587 / DSM 3638 / JCM 8422 / Vc1)).